Consider the following 329-residue polypeptide: 2,3,4,5-tetrahydropyridine-2,6-dicarboxylate N-succinyltransferase (329 aa).

Residues Asp-177 and Glu-194 each contribute to the Mg(2+) site. Glu-210 (acyl-anhydride intermediate) is an active-site residue. Succinyl-CoA is bound by residues Arg-212, Gly-227, Ser-230, Ala-253, 268–269, Gly-276, Lys-288, and 301–304; these read EA and RRNS.

This sequence belongs to the type 2 tetrahydrodipicolinate N-succinyltransferase family. As to quaternary structure, homotrimer.

The protein resides in the cytoplasm. It carries out the reaction (S)-2,3,4,5-tetrahydrodipicolinate + succinyl-CoA + H2O = (S)-2-succinylamino-6-oxoheptanedioate + CoA. Its pathway is amino-acid biosynthesis; L-lysine biosynthesis via DAP pathway; LL-2,6-diaminopimelate from (S)-tetrahydrodipicolinate (succinylase route): step 1/3. Functionally, catalyzes the conversion of the cyclic tetrahydrodipicolinate (THDP) into the acyclic N-succinyl-L-2-amino-6-oxopimelate using succinyl-CoA. This chain is 2,3,4,5-tetrahydropyridine-2,6-dicarboxylate N-succinyltransferase, found in Streptomyces coelicolor (strain ATCC BAA-471 / A3(2) / M145).